The following is a 123-amino-acid chain: Galanin peptides (123 aa).

The N-terminal stretch at 1 to 19 (MPRGCALLLASLLLASALS) is a signal peptide. Residues 20–30 (ATLGLGSPVKE) constitute a propeptide that is removed on maturation. A61 is subject to Alanine amide. Residues S116 and S117 each carry the phosphoserine modification.

Belongs to the galanin family.

Its subcellular location is the secreted. In terms of biological role, endocrine hormone of the central and peripheral nervous systems that binds and activates the G protein-coupled receptors GALR1, GALR2, and GALR3. This small neuropeptide may regulate diverse physiologic functions including contraction of smooth muscle of the gastrointestinal and genitourinary tract, growth hormone and insulin release and adrenal secretion. The polypeptide is Galanin peptides (GAL) (Sus scrofa (Pig)).